Consider the following 32-residue polypeptide: Trypsin inhibitor 4 (32 aa).

3 cysteine pairs are disulfide-bonded: Cys6–Cys23, Cys13–Cys25, and Cys19–Cys31.

Belongs to the protease inhibitor I7 (squash-type serine protease inhibitor) family.

The protein localises to the secreted. Inhibits trypsin. This Cucurbita maxima (Pumpkin) protein is Trypsin inhibitor 4.